A 374-amino-acid polypeptide reads, in one-letter code: Arrestin domain-containing protein 15 (374 aa).

The segment at 344–374 (HHLNRSKAKVSKTEQQQRKTRNIVEENPYFR) is disordered.

This sequence belongs to the arrestin family.

This chain is Arrestin domain-containing protein 15 (arrd-15), found in Caenorhabditis elegans.